Consider the following 216-residue polypeptide: uncharacterized protein (216 aa).

A helical transmembrane segment spans residues 39 to 59 (VLPLTFIGSLLILILTIVYYF). Residues 59 to 108 (FTLSGSVNELKNEISKEKSKKERLLSEIKRLEELKKTLETKKAIYEVVKI) are a coiled coil.

It is found in the membrane. This is an uncharacterized protein from Aquifex aeolicus (strain VF5).